The chain runs to 279 residues: Small ribosomal subunit protein uS2 (279 aa).

Belongs to the universal ribosomal protein uS2 family. Component of the small ribosomal subunit. Mature ribosomes consist of a small (40S) and a large (60S) subunit. The 40S subunit contains about 33 different proteins and 1 molecule of RNA (18S). The 60S subunit contains about 49 different proteins and 3 molecules of RNA (28S, 5.8S and 5S). Interacts with ribosomal protein S21.

It is found in the cytoplasm. Functionally, required for the assembly and/or stability of the 40S ribosomal subunit. Required for the processing of the 20S rRNA-precursor to mature 18S rRNA in a late step of the maturation of 40S ribosomal subunits. The polypeptide is Small ribosomal subunit protein uS2 (Schistosoma japonicum (Blood fluke)).